Here is a 273-residue protein sequence, read N- to C-terminus: MAIVKCKPTSPGRRHVVKVVNPELHKGKPFAPLVEKNSKSGGRNNNGRITTRHIGGGHKQAYRIVDFKRNKDGIPAVVERLEYDPNRSANIALVLYKDGERRYILAPKGLKAGDQIQSGVDAAIKAGNTLPMRNIPVGSTVHNVEMKPGKGGQLARSAGTYVQIVARDGSYVTLRLRSGEMRKVESDCRATLGEVGNAEHMLRVLGKAGAARWRGIRPTVRGTAMNPVDHPHGGGEGRNFGKHPVSPWGLQTKGKKTRSNKRTDKFIVRRRTK.

Disordered stretches follow at residues 28 to 53 (KPFA…TTRH) and 221 to 273 (RGTA…RRTK). Residues 39-48 (KSGGRNNNGR) are compositionally biased toward low complexity.

The protein belongs to the universal ribosomal protein uL2 family. Part of the 50S ribosomal subunit. Forms a bridge to the 30S subunit in the 70S ribosome.

Functionally, one of the primary rRNA binding proteins. Required for association of the 30S and 50S subunits to form the 70S ribosome, for tRNA binding and peptide bond formation. It has been suggested to have peptidyltransferase activity; this is somewhat controversial. Makes several contacts with the 16S rRNA in the 70S ribosome. The polypeptide is Large ribosomal subunit protein uL2 (Pectobacterium atrosepticum (strain SCRI 1043 / ATCC BAA-672) (Erwinia carotovora subsp. atroseptica)).